Consider the following 657-residue polypeptide: Probable Xaa-Pro aminopeptidase P (657 aa).

Residues aspartate 453, aspartate 464, glutamate 562, and glutamate 576 each coordinate Mn(2+).

This sequence belongs to the peptidase M24B family. Mn(2+) is required as a cofactor.

The catalysed reaction is Release of any N-terminal amino acid, including proline, that is linked to proline, even from a dipeptide or tripeptide.. Its function is as follows. Catalyzes the removal of a penultimate prolyl residue from the N-termini of peptides. The sequence is that of Probable Xaa-Pro aminopeptidase P (ampp) from Talaromyces stipitatus (strain ATCC 10500 / CBS 375.48 / QM 6759 / NRRL 1006) (Penicillium stipitatum).